The following is an 827-amino-acid chain: Ribosome biogenesis protein ERB1 (827 aa).

Positions methionine 1–proline 129 are disordered. The span at aspartate 7–lysine 18 shows a compositional bias: basic and acidic residues. Residues cysteine 45–valine 60 are compositionally biased toward acidic residues. The span at leucine 61 to serine 77 shows a compositional bias: low complexity. Acidic residues-rich tracts occupy residues glycine 81–alanine 99 and glutamate 108–aspartate 124. The required for interaction with NOP7 stretch occupies residues arginine 291–serine 409. The segment at serine 409–proline 445 is required for interaction with YTM1. 6 WD repeats span residues glycine 461–lysine 500, asparagine 509–glutamate 549, lysine 657–lysine 695, proline 698–lysine 737, tyrosine 741–lysine 780, and valine 796–threonine 827.

Belongs to the WD repeat BOP1/ERB1 family. As to quaternary structure, component of the NOP7 complex, composed of ERB1, NOP7 and YTM1. The complex is held together by ERB1, which interacts with NOP7 via its N-terminal domain and with YTM1 via a high-affinity interaction between the seven-bladed beta-propeller domains of the 2 proteins. The NOP7 complex associates with the 66S pre-ribosome.

The protein resides in the nucleus. It localises to the nucleolus. The protein localises to the nucleoplasm. Functionally, component of the NOP7 complex, which is required for maturation of the 25S and 5.8S ribosomal RNAs and formation of the 60S ribosome. This Eremothecium gossypii (strain ATCC 10895 / CBS 109.51 / FGSC 9923 / NRRL Y-1056) (Yeast) protein is Ribosome biogenesis protein ERB1.